Consider the following 845-residue polypeptide: Protein arginine N-methyltransferase 9 (845 aa).

TPR repeat units lie at residues V25–L58, Q67–D100, and E101–F134. 2 SAM-dependent MTase PRMT-type domains span residues A137–I466 and N530–Q845.

It belongs to the class I-like SAM-binding methyltransferase superfamily. Protein arginine N-methyltransferase family. Found in a complex with PRMT9, SF3B2 and SF3B4. Interacts with SF3B2.

It localises to the cytoplasm. The catalysed reaction is L-arginyl-[protein] + 2 S-adenosyl-L-methionine = N(omega),N(omega)'-dimethyl-L-arginyl-[protein] + 2 S-adenosyl-L-homocysteine + 2 H(+). Arginine methyltransferase that can both catalyze the formation of omega-N monomethylarginine (MMA) and symmetrical dimethylarginine (sDMA). Specifically mediates the symmetrical dimethylation of SF3B2. Involved in the regulation of alternative splicing of pre-mRNA. This Homo sapiens (Human) protein is Protein arginine N-methyltransferase 9.